Here is a 479-residue protein sequence, read N- to C-terminus: Aspartyl/glutamyl-tRNA(Asn/Gln) amidotransferase subunit B (479 aa).

It belongs to the GatB/GatE family. GatB subfamily. Heterotrimer of A, B and C subunits.

It carries out the reaction L-glutamyl-tRNA(Gln) + L-glutamine + ATP + H2O = L-glutaminyl-tRNA(Gln) + L-glutamate + ADP + phosphate + H(+). The enzyme catalyses L-aspartyl-tRNA(Asn) + L-glutamine + ATP + H2O = L-asparaginyl-tRNA(Asn) + L-glutamate + ADP + phosphate + 2 H(+). Functionally, allows the formation of correctly charged Asn-tRNA(Asn) or Gln-tRNA(Gln) through the transamidation of misacylated Asp-tRNA(Asn) or Glu-tRNA(Gln) in organisms which lack either or both of asparaginyl-tRNA or glutaminyl-tRNA synthetases. The reaction takes place in the presence of glutamine and ATP through an activated phospho-Asp-tRNA(Asn) or phospho-Glu-tRNA(Gln). The sequence is that of Aspartyl/glutamyl-tRNA(Asn/Gln) amidotransferase subunit B from Streptococcus pyogenes serotype M28 (strain MGAS6180).